A 202-amino-acid polypeptide reads, in one-letter code: Oligoribonuclease (202 aa).

The Exonuclease domain occupies 2-166 (LVWIDCEMTG…ADIQESIEEL (165 aa)). Tyr123 is an active-site residue.

The protein belongs to the oligoribonuclease family.

It localises to the cytoplasm. Functionally, 3'-to-5' exoribonuclease specific for small oligoribonucleotides. This chain is Oligoribonuclease, found in Cutibacterium acnes (strain DSM 16379 / KPA171202) (Propionibacterium acnes).